Reading from the N-terminus, the 192-residue chain is MSKLYFYYSAMNAGKTTALLQSSYNYQERGMRTLLYTAAVVCQKNDIKYIRSRIGLTSSARIFNGKTNLFKQISIVNKEKKIHCILIDECHFLNRNQVIDLTKVVDILNIPVLCYGLRTDFQSKLFSGSLWLLAWADKLIELKTICYCGRQANRVLRIDNNGCVIRAGSQIMFGDNNQYVSVCRKHFHKKYN.

ATP contacts are provided by residues 9–16 and 88–91; these read SAMNAGKT and DECH. Glu89 acts as the Proton acceptor in catalysis. Zn(2+)-binding residues include Cys146, Cys148, Cys183, and His186.

It belongs to the thymidine kinase family. Homotetramer.

The protein resides in the cytoplasm. It catalyses the reaction thymidine + ATP = dTMP + ADP + H(+). The protein is Thymidine kinase of Blochmanniella floridana.